A 199-amino-acid polypeptide reads, in one-letter code: Holliday junction branch migration complex subunit RuvA (199 aa).

Positions 1–64 are domain I; sequence MIARLTGMLA…EDAISLFGFR (64 aa). The interval 65–143 is domain II; the sequence is TVAEKEFFQV…KMDVAPSTKE (79 aa). Residues 144–154 form a flexible linker region; sequence AAPSEAPPEVA. Positions 154 to 199 are domain III; sequence ADDVASALVNLGYKEAVVRKVLAEMAIESGASTEAVLRQALKILMK.

The protein belongs to the RuvA family. In terms of assembly, homotetramer. Forms an RuvA(8)-RuvB(12)-Holliday junction (HJ) complex. HJ DNA is sandwiched between 2 RuvA tetramers; dsDNA enters through RuvA and exits via RuvB. An RuvB hexamer assembles on each DNA strand where it exits the tetramer. Each RuvB hexamer is contacted by two RuvA subunits (via domain III) on 2 adjacent RuvB subunits; this complex drives branch migration. In the full resolvosome a probable DNA-RuvA(4)-RuvB(12)-RuvC(2) complex forms which resolves the HJ.

The protein resides in the cytoplasm. Its function is as follows. The RuvA-RuvB-RuvC complex processes Holliday junction (HJ) DNA during genetic recombination and DNA repair, while the RuvA-RuvB complex plays an important role in the rescue of blocked DNA replication forks via replication fork reversal (RFR). RuvA specifically binds to HJ cruciform DNA, conferring on it an open structure. The RuvB hexamer acts as an ATP-dependent pump, pulling dsDNA into and through the RuvAB complex. HJ branch migration allows RuvC to scan DNA until it finds its consensus sequence, where it cleaves and resolves the cruciform DNA. This is Holliday junction branch migration complex subunit RuvA from Geobacter metallireducens (strain ATCC 53774 / DSM 7210 / GS-15).